The sequence spans 290 residues: ATP synthase gamma chain (290 aa).

Belongs to the ATPase gamma chain family. F-type ATPases have 2 components, CF(1) - the catalytic core - and CF(0) - the membrane proton channel. CF(1) has five subunits: alpha(3), beta(3), gamma(1), delta(1), epsilon(1). CF(0) has three main subunits: a, b and c.

The protein resides in the cell inner membrane. Produces ATP from ADP in the presence of a proton gradient across the membrane. The gamma chain is believed to be important in regulating ATPase activity and the flow of protons through the CF(0) complex. This is ATP synthase gamma chain from Gemmatimonas aurantiaca (strain DSM 14586 / JCM 11422 / NBRC 100505 / T-27).